The sequence spans 445 residues: Putative aldehyde dehydrogenase AldX (445 aa).

Catalysis depends on residues E214 and C248.

This sequence belongs to the aldehyde dehydrogenase family.

It catalyses the reaction an aldehyde + NAD(+) + H2O = a carboxylate + NADH + 2 H(+). The protein is Putative aldehyde dehydrogenase AldX (aldX) of Bacillus subtilis (strain 168).